The primary structure comprises 231 residues: Histone H1 (231 aa).

Residues 1–17 (MSDPAIEVAPVPVASPA) show a composition bias toward low complexity. Disordered regions lie at residues 1 to 44 (MSDP…PVSD) and 124 to 231 (TKKV…AKKA). In terms of domain architecture, H15 spans 38 to 112 (THPPVSDMIV…GASGSFKLPA (75 aa)). Basic residues-rich tracts occupy residues 145–171 (KVKK…KTTK), 178–213 (PTKK…KAKK), and 221–231 (KAAKKPSAKKA).

It belongs to the histone H1/H5 family.

The protein resides in the nucleus. The protein localises to the chromosome. Functionally, histones H1 are necessary for the condensation of nucleosome chains into higher-order structures. This Chironomus thummi thummi (Midge) protein is Histone H1.